A 177-amino-acid chain; its full sequence is Large ribosomal subunit protein uL5 (177 aa).

Belongs to the universal ribosomal protein uL5 family. In terms of assembly, part of the 50S ribosomal subunit; contacts the 5S rRNA and probably tRNA. Forms a bridge to the 30S subunit in the 70S ribosome.

In terms of biological role, this is one of the proteins that bind and probably mediate the attachment of the 5S RNA into the large ribosomal subunit, where it forms part of the central protuberance. In the 70S ribosome it contacts protein S13 of the 30S subunit (bridge B1b), connecting the 2 subunits; this bridge is implicated in subunit movement. May contact the P site tRNA; the 5S rRNA and some of its associated proteins might help stabilize positioning of ribosome-bound tRNAs. The sequence is that of Large ribosomal subunit protein uL5 from Sulfurisphaera tokodaii (strain DSM 16993 / JCM 10545 / NBRC 100140 / 7) (Sulfolobus tokodaii).